A 482-amino-acid chain; its full sequence is Complement C1r subcomponent-like protein (482 aa).

The signal sequence occupies residues 1–43 (MSGFRGLVPELENSLWSSPTTSCMSKMCWWLLWGILHTCPTQA). The CUB domain maps to 44–166 (SVLLAQQSPQ…KGFLALYQAV (123 aa)). Disulfide bonds link cysteine 97-cysteine 115 and cysteine 190-cysteine 223. Residues 166–225 (VAVNQPNGDTEAVTTPGAPKIQNHCQDPYYKADQTGTLSCPSSWKWKDRQDGGEVPECVP) enclose the Sushi domain. The region spanning 240-479 (TFGSSRAKLG…YMDWIKRVIE (240 aa)) is the Peptidase S1 domain. Catalysis depends on charge relay system residues histidine 278 and aspartate 334. An N-linked (GlcNAc...) asparagine glycan is attached at asparagine 358. Intrachain disulfides connect cysteine 397–cysteine 416 and cysteine 427–cysteine 457. The active-site Charge relay system is serine 431.

The protein belongs to the peptidase S1 family. Expressed in liver (at protein level).

The protein localises to the secreted. Mediates the proteolytic cleavage of HP/haptoglobin in the endoplasmic reticulum. The protein is Complement C1r subcomponent-like protein (C1rl) of Mus musculus (Mouse).